Reading from the N-terminus, the 108-residue chain is Thioredoxin Asp f 28 (108 aa).

The Thioredoxin domain occupies 1-108 (MSHGKVIAVD…LEEMIKSISA (108 aa)). Catalysis depends on nucleophile residues Cys-33 and Cys-36. Cys-33 and Cys-36 are disulfide-bonded.

Belongs to the thioredoxin family.

In terms of biological role, participates in various redox reactions through the reversible oxidation of its active center dithiol to a disulfide and catalyzes dithiol-disulfide exchange reactions. This chain is Thioredoxin Asp f 28, found in Aspergillus fumigatus (Neosartorya fumigata).